A 228-amino-acid polypeptide reads, in one-letter code: Hematopoietically-expressed homeobox protein hhex (228 aa).

Positions 117–176 (RKGGQVRFSNDQTIELEKKFETQKYLSPPERKRLAKMLQLSERQVKTWFQNRRAKWRRLK) form a DNA-binding region, homeobox. The interval 175-228 (LKQENPPSTGKREAEDSDTRRLSDAAARARELESGASTDSEELLDIEDEHQFTL) is disordered. Basic and acidic residues predominate over residues 184-207 (GKREAEDSDTRRLSDAAARARELE). Positions 213–222 (DSEELLDIED) are enriched in acidic residues.

Expressed in embryonic endothelial and blood lineages. From late-blastula stage, expression is restricted to the dorsal marginal region of the extraembryonic yolk syncytial layer (YSL). By the onset of gastrulation, expressed in the entire dorsal half of the YSL. Post-gastrulation, expression appears in both anterior and posterior lateral plate mesoderm by the 3-somite stage. Posteriorly, expression is in the intermediate cell mass (ICM), which contains both endothelial and blood precursors. Subsequently expressed in the developing endothelial cells including the endocardium until the onset of circulation (24 hpf) and disappears completely by 30 hpf, at which point expression is seen in the thyroid and liver primordia. Also expressed in the developing biliary tree and pancreas.

Its subcellular location is the nucleus. In terms of biological role, recognizes the DNA sequence 5'-ATTAA-3'. Transcriptional repressor. Regulates the differentiation of both endothelial and blood cells. Plays a role in embryonic dorsoventral patterning by regulating bmp expression. May establish anterior identity. Functions in the embryo to regulate liver development. Functions extraembryonically to generate organ chirality. In Danio rerio (Zebrafish), this protein is Hematopoietically-expressed homeobox protein hhex.